The primary structure comprises 521 residues: Vang-like protein 2-A (521 aa).

Positions 1 to 81 (MDNDSQYSGY…TTVVTGTSEH (81 aa)) are disordered. The Cytoplasmic segment spans residues 1–108 (MDNDSQYSGY…AKLDCSRHLG (108 aa)). Residues 15 to 33 (GHSRSSRKHRDRRERHRSK) show a composition bias toward basic residues. Residues 57–67 (ESTRGEDRDDN) are compositionally biased toward basic and acidic residues. Low complexity predominate over residues 69 to 81 (GETTTVVTGTSEH). Residues 109 to 129 (VVIGGALALLSFLTPIAFMLL) traverse the membrane as a helical segment. The Extracellular segment spans residues 130–147 (PQILWREDLEQCGTACEG). Residues 148 to 168 (LFISVAFKLLILLLGSWALFF) form a helical membrane-spanning segment. At 169–178 (RRPKAFFPRV) the chain is on the cytoplasmic side. The chain crosses the membrane as a helical span at residues 179–199 (FVFRALLMVLVFLLVVSYWLF). Over 200-218 (YGVRILESRDKNYQGIVQY) the chain is Extracellular. The helical transmembrane segment at 219-239 (AVSLVDALLFVHYLAVVLLEL) threads the bilayer. Residues 240–521 (RQLQPQFTIK…VMRLQSETSV (282 aa)) are Cytoplasmic-facing. Residues 518-521 (ETSV) carry the PDZ-binding motif.

Belongs to the Vang family. Interacts with dvl/dsh. Interacts with prickle3. As to expression, during gastrulation, broadly expressed throughout the marginal zone and animal cap region. From the neurula stages, expression becomes concentrated in neural tissues, in the neural plate and neural tube.

The protein resides in the cell membrane. Functionally, has a role in non-canonical Wnt/planar cell polarity (PCP) signaling; can recruit dvl/dsh and prickle from the cytoplasm to the plasma membrane. Acts in a PCP complex to regulate the polarized assembly of fibronectrin on the surface of the mesoderm during gastrulation. Regulates convergent extension cell movements in both dorsal mesoderm and neural tissue during gastrulation, without affecting cell fate. Regulates neural fold closure during neurulation. May be required for cell surface localization of fzd3 and fzd6 in the inner ear. This is Vang-like protein 2-A (vangl2-a) from Xenopus laevis (African clawed frog).